A 579-amino-acid polypeptide reads, in one-letter code: 2-isopropylmalate synthase (579 aa).

One can recognise a Pyruvate carboxyltransferase domain in the interval 40-314; it reads PRWCAVDLRD…DPMIDFSDID (275 aa). Asp49, His253, His255, and Asn289 together coordinate Mg(2+). The segment at 456-579 is regulatory domain; it reads SDEEQAQWGR…VNRAVRDAQA (124 aa).

This sequence belongs to the alpha-IPM synthase/homocitrate synthase family. LeuA type 2 subfamily. As to quaternary structure, homodimer. Mg(2+) is required as a cofactor.

It localises to the cytoplasm. The catalysed reaction is 3-methyl-2-oxobutanoate + acetyl-CoA + H2O = (2S)-2-isopropylmalate + CoA + H(+). The protein operates within amino-acid biosynthesis; L-leucine biosynthesis; L-leucine from 3-methyl-2-oxobutanoate: step 1/4. Functionally, catalyzes the condensation of the acetyl group of acetyl-CoA with 3-methyl-2-oxobutanoate (2-ketoisovalerate) to form 3-carboxy-3-hydroxy-4-methylpentanoate (2-isopropylmalate). This chain is 2-isopropylmalate synthase, found in Paenarthrobacter aurescens (strain TC1).